The primary structure comprises 357 residues: Phosphate acyltransferase (357 aa).

It belongs to the PlsX family. As to quaternary structure, homodimer. Probably interacts with PlsY.

It localises to the cytoplasm. It carries out the reaction a fatty acyl-[ACP] + phosphate = an acyl phosphate + holo-[ACP]. The protein operates within lipid metabolism; phospholipid metabolism. Catalyzes the reversible formation of acyl-phosphate (acyl-PO(4)) from acyl-[acyl-carrier-protein] (acyl-ACP). This enzyme utilizes acyl-ACP as fatty acyl donor, but not acyl-CoA. This is Phosphate acyltransferase from Roseobacter denitrificans (strain ATCC 33942 / OCh 114) (Erythrobacter sp. (strain OCh 114)).